Here is a 214-residue protein sequence, read N- to C-terminus: Large ribosomal subunit protein uL3 (214 aa).

The tract at residues 133–153 (GRATHGNSRSHNVPGSIGMAQ) is disordered. N5-methylglutamine is present on Gln-153.

It belongs to the universal ribosomal protein uL3 family. In terms of assembly, part of the 50S ribosomal subunit. Forms a cluster with proteins L14 and L19. In terms of processing, methylated by PrmB.

One of the primary rRNA binding proteins, it binds directly near the 3'-end of the 23S rRNA, where it nucleates assembly of the 50S subunit. The sequence is that of Large ribosomal subunit protein uL3 from Cupriavidus metallidurans (strain ATCC 43123 / DSM 2839 / NBRC 102507 / CH34) (Ralstonia metallidurans).